A 49-amino-acid chain; its full sequence is MTAKKVALACSVCGQRNYFVPENPKRTERLTLKKFCKHCGRVTVHQETK.

It belongs to the bacterial ribosomal protein bL33 family.

The protein is Large ribosomal subunit protein bL33B of Lacticaseibacillus paracasei (strain ATCC 334 / BCRC 17002 / CCUG 31169 / CIP 107868 / KCTC 3260 / NRRL B-441) (Lactobacillus paracasei).